Consider the following 311-residue polypeptide: S-adenosyl-L-methionine-dependent tRNA 4-demethylwyosine synthase (311 aa).

Residues cysteine 26, cysteine 39, cysteine 52, cysteine 62, cysteine 66, and cysteine 69 each contribute to the [4Fe-4S] cluster site. One can recognise a Radical SAM core domain in the interval tyrosine 45 to asparagine 283.

The protein belongs to the TYW1 family. In terms of assembly, monomer. Requires [4Fe-4S] cluster as cofactor.

It is found in the cytoplasm. The catalysed reaction is N(1)-methylguanosine(37) in tRNA(Phe) + pyruvate + S-adenosyl-L-methionine = 4-demethylwyosine(37) in tRNA(Phe) + 5'-deoxyadenosine + L-methionine + CO2 + H2O. Its function is as follows. Component of the wyosine derivatives biosynthesis pathway that catalyzes the condensation of N-methylguanine with 2 carbon atoms from pyruvate to form the tricyclic 4-demethylwyosine (imG-14) on guanosine-37 of tRNA(Phe). The chain is S-adenosyl-L-methionine-dependent tRNA 4-demethylwyosine synthase from Methanocaldococcus jannaschii (strain ATCC 43067 / DSM 2661 / JAL-1 / JCM 10045 / NBRC 100440) (Methanococcus jannaschii).